A 142-amino-acid chain; its full sequence is 3-hydroxyacyl-[acyl-carrier-protein] dehydratase FabZ (142 aa).

Residue histidine 50 is part of the active site.

Belongs to the thioester dehydratase family. FabZ subfamily.

It localises to the cytoplasm. It carries out the reaction a (3R)-hydroxyacyl-[ACP] = a (2E)-enoyl-[ACP] + H2O. In terms of biological role, involved in unsaturated fatty acids biosynthesis. Catalyzes the dehydration of short chain beta-hydroxyacyl-ACPs and long chain saturated and unsaturated beta-hydroxyacyl-ACPs. The chain is 3-hydroxyacyl-[acyl-carrier-protein] dehydratase FabZ from Clostridium botulinum (strain Alaska E43 / Type E3).